Here is a 311-residue protein sequence, read N- to C-terminus: tRNA dimethylallyltransferase (311 aa).

12–19 (GPTASGKT) lines the ATP pocket. A substrate-binding site is contributed by 14-19 (TASGKT). Interaction with substrate tRNA stretches follow at residues 37 to 40 (DSAM) and 161 to 165 (QRIQR).

The protein belongs to the IPP transferase family. Monomer. Mg(2+) is required as a cofactor.

The catalysed reaction is adenosine(37) in tRNA + dimethylallyl diphosphate = N(6)-dimethylallyladenosine(37) in tRNA + diphosphate. Its function is as follows. Catalyzes the transfer of a dimethylallyl group onto the adenine at position 37 in tRNAs that read codons beginning with uridine, leading to the formation of N6-(dimethylallyl)adenosine (i(6)A). This is tRNA dimethylallyltransferase from Coxiella burnetii (strain RSA 331 / Henzerling II).